The following is a 66-amino-acid chain: Large ribosomal subunit protein bL35 (66 aa).

Belongs to the bacterial ribosomal protein bL35 family.

This is Large ribosomal subunit protein bL35 from Thermodesulfovibrio yellowstonii (strain ATCC 51303 / DSM 11347 / YP87).